We begin with the raw amino-acid sequence, 102 residues long: Small ribosomal subunit protein uS10 (102 aa).

Belongs to the universal ribosomal protein uS10 family. As to quaternary structure, part of the 30S ribosomal subunit.

Involved in the binding of tRNA to the ribosomes. The polypeptide is Small ribosomal subunit protein uS10 (Bartonella tribocorum (strain CIP 105476 / IBS 506)).